The chain runs to 500 residues: NAD(P)H-quinone oxidoreductase chain 4, chloroplastic (500 aa).

A run of 14 helical transmembrane segments spans residues 4-24, 35-55, 87-107, 111-131, 134-154, 167-187, 211-231, 242-262, 274-294, 313-333, 334-354, 386-406, 417-437, and 462-482; these read FPWL…IFFL, YTIA…CYHF, LGSI…AWPV, SQLF…LFSS, LLLF…LLSM, FILY…GMGL, ILLY…IPLH, HYST…YGLI, YLFS…AALT, MGFI…GAIL, QILS…TACD, LALP…GLIT, LITF…LSML, and LFLL…PDFV.

It belongs to the complex I subunit 4 family.

It is found in the plastid. The protein localises to the chloroplast thylakoid membrane. The catalysed reaction is a plastoquinone + NADH + (n+1) H(+)(in) = a plastoquinol + NAD(+) + n H(+)(out). It catalyses the reaction a plastoquinone + NADPH + (n+1) H(+)(in) = a plastoquinol + NADP(+) + n H(+)(out). This is NAD(P)H-quinone oxidoreductase chain 4, chloroplastic from Saccharum hybrid (Sugarcane).